Consider the following 408-residue polypeptide: Aspartokinase 2 (408 aa).

7–10 (KFGG) is an ATP binding site. 25-30 (RAIAEK) is a substrate binding site. Ser-41 contributes to the ATP binding site. Substrate is bound by residues 47-49 (TDE), Glu-74, 125-126 (LE), 150-153 (RGGS), and Ser-153. ATP contacts are provided by residues 173–174 (TD) and 179–184 (FTTDPR). 2 consecutive ACT domains span residues 264-337 (VTIY…TESK) and 343-408 (IVGS…PSAV). Substrate is bound by residues 289 to 291 (NVD), Gln-295, 354 to 355 (VA), 368 to 369 (LI), and 375 to 376 (SE).

Belongs to the aspartokinase family. In terms of assembly, tetramer consisting of 2 isoforms Alpha (catalytic and regulation) and of a homodimer of 2 isoforms Beta (regulation).

It catalyses the reaction L-aspartate + ATP = 4-phospho-L-aspartate + ADP. It functions in the pathway amino-acid biosynthesis; L-lysine biosynthesis via DAP pathway; (S)-tetrahydrodipicolinate from L-aspartate: step 1/4. Its pathway is amino-acid biosynthesis; L-methionine biosynthesis via de novo pathway; L-homoserine from L-aspartate: step 1/3. It participates in amino-acid biosynthesis; L-threonine biosynthesis; L-threonine from L-aspartate: step 1/5. With respect to regulation, lysine-sensitive. Regulated by degradation in response to starvation of cells for various nutrients. Ammonium starvation induced the fastest aspartokinase II decline, followed by amino acid starvation and glucose limitation. Catalyzes the phosphorylation of the beta-carboxyl group of aspartic acid with ATP to yield 4-phospho-L-aspartate, which is involved in the branched biosynthetic pathway leading to the biosynthesis of amino acids threonine, isoleucine and methionine. The chain is Aspartokinase 2 (lysC) from Bacillus subtilis (strain 168).